The following is a 458-amino-acid chain: Cysteine--tRNA ligase (458 aa).

Cysteine 27 lines the Zn(2+) pocket. Positions 29-39 match the 'HIGH' region motif; sequence ITPQSEPHIGH. Zn(2+) is bound by residues cysteine 207, histidine 232, and glutamate 236. The 'KMSKS' region motif lies at 265–269; the sequence is KMSKS. Lysine 268 is a binding site for ATP.

The protein belongs to the class-I aminoacyl-tRNA synthetase family. In terms of assembly, monomer. It depends on Zn(2+) as a cofactor.

It is found in the cytoplasm. It carries out the reaction tRNA(Cys) + L-cysteine + ATP = L-cysteinyl-tRNA(Cys) + AMP + diphosphate. This is Cysteine--tRNA ligase from Dehalococcoides mccartyi (strain ATCC BAA-2266 / KCTC 15142 / 195) (Dehalococcoides ethenogenes (strain 195)).